Consider the following 264-residue polypeptide: MVKPLPRLRLQGFNNLTKALSFNIYDVCYARTEEERQRYIDYIDERYDADRLTQILTDVAEIIGANILNIARQDYDPQGASVTILISEEPVIDKKQAGKELISDAVVAHMDKSHITVHTYPETHPQEGIATFRADIDVATCGVISPLKALNYLIESLESDIVIMDYRVRGFTRDVKGKKHFIDHKINSIQNFLSKSIKSRYEMFDVNVYQENIFHTKMHLKDFDLDQYLFEEKARNLSFKERMKIEALLKLEIEELFHGRNLAE.

The active-site Schiff-base intermediate with substrate; via pyruvic acid is the S113. A Pyruvic acid (Ser); by autocatalysis modification is found at S113. The active-site Proton acceptor; for processing activity is the H118. The active-site Proton donor; for catalytic activity is C141.

The protein belongs to the prokaryotic AdoMetDC family. Type 2 subfamily. Heterooctamer of four alpha and four beta chains arranged as a tetramer of alpha/beta heterodimers. Pyruvate is required as a cofactor. Post-translationally, is synthesized initially as an inactive proenzyme. Formation of the active enzyme involves a self-maturation process in which the active site pyruvoyl group is generated from an internal serine residue via an autocatalytic post-translational modification. Two non-identical subunits are generated from the proenzyme in this reaction, and the pyruvate is formed at the N-terminus of the alpha chain, which is derived from the carboxyl end of the proenzyme. The post-translation cleavage follows an unusual pathway, termed non-hydrolytic serinolysis, in which the side chain hydroxyl group of the serine supplies its oxygen atom to form the C-terminus of the beta chain, while the remainder of the serine residue undergoes an oxidative deamination to produce ammonia and the pyruvoyl group blocking the N-terminus of the alpha chain.

The catalysed reaction is S-adenosyl-L-methionine + H(+) = S-adenosyl 3-(methylsulfanyl)propylamine + CO2. The protein operates within amine and polyamine biosynthesis; S-adenosylmethioninamine biosynthesis; S-adenosylmethioninamine from S-adenosyl-L-methionine: step 1/1. Catalyzes the decarboxylation of S-adenosylmethionine to S-adenosylmethioninamine (dcAdoMet), the propylamine donor required for the synthesis of the polyamines spermine and spermidine from the diamine putrescine. This is S-adenosylmethionine decarboxylase proenzyme from Xylella fastidiosa (strain 9a5c).